A 234-amino-acid chain; its full sequence is Probable glycerol uptake facilitator protein (234 aa).

The next 2 helical transmembrane spans lie at 3-23 and 36-56; these read VYLA…GVVA and GWIV…YLVG. Residues 64–66 carry the NPA 1 motif; that stretch reads NPA. A run of 3 helical transmembrane segments spans residues 82-102, 134-154, and 164-184; these read VPGY…LVYL, LLTE…IGAN, and LVGF…GYAI. The NPA 2 motif lies at 185–187; that stretch reads NPA. The chain crosses the membrane as a helical span at residues 214–234; the sequence is VPIIGPIIGGILGASLYNWLF.

The protein belongs to the MIP/aquaporin (TC 1.A.8) family.

It localises to the cell membrane. The enzyme catalyses glycerol(in) = glycerol(out). Functionally, mediates glycerol diffusion across the cytoplasmic membrane via a pore-type mechanism. This is Probable glycerol uptake facilitator protein (glpF) from Thermotoga maritima (strain ATCC 43589 / DSM 3109 / JCM 10099 / NBRC 100826 / MSB8).